The following is an 863-amino-acid chain: Transforming growth factor-beta receptor-associated protein 1 homolog (863 aa).

A CNH domain is found at 23–297; sequence RINIECIECC…QLLQDFEGKV (275 aa). A CHCR repeat occupies 564-729; that stretch reads RPTSEERRGQ…LLSVYLDPDV (166 aa).

It belongs to the TRAP1 family. Component of the putative class C core vacuole/endosome tethering (CORVET) complex.

Its subcellular location is the cytoplasm. The protein localises to the early endosome. Plays a role in the TGF-beta signaling pathway. Functionally, plays a role in vesicle-mediated protein trafficking of the endocytic membrane transport pathway. Believed to act as a component of the putative CORVET endosomal tethering complexes which is proposed to be involved in the Rab5-to-Rab7 endosome conversion probably implicating MON1A/B, and via binding SNAREs and SNARE complexes to mediate tethering and docking events during SNARE-mediated membrane fusion. The CORVET complex is proposed to function as a Rab5 effector to mediate early endosome fusion probably in specific endosome subpopulations. In Danio rerio (Zebrafish), this protein is Transforming growth factor-beta receptor-associated protein 1 homolog (tgfbrap1).